Here is a 45-residue protein sequence, read N- to C-terminus: Large ribosomal subunit protein bL34 (45 aa).

The tract at residues 1–27 (MTKRTLGGTSRKRKRVSGFRVRMRSHT) is disordered. Residues 10 to 27 (SRKRKRVSGFRVRMRSHT) show a composition bias toward basic residues.

Belongs to the bacterial ribosomal protein bL34 family.

The chain is Large ribosomal subunit protein bL34 from Synechococcus sp. (strain CC9902).